Here is a 790-residue protein sequence, read N- to C-terminus: Phenylalanine--tRNA ligase beta subunit (790 aa).

The region spanning 39 to 154 is the tRNA-binding domain; sequence PDSLNTVVTG…ADTPLGESAC (116 aa). One can recognise a B5 domain in the interval 404–483; the sequence is FSPLSLSVRP…FVQKTQKILP (80 aa). Mg(2+)-binding residues include Asp-457, Asp-463, Glu-466, and Glu-467. The region spanning 694 to 790 is the FDX-ACB domain; that stretch reads PIYPASSRDI…KLANIGQGNS (97 aa).

This sequence belongs to the phenylalanyl-tRNA synthetase beta subunit family. Type 1 subfamily. Tetramer of two alpha and two beta subunits. Requires Mg(2+) as cofactor.

Its subcellular location is the cytoplasm. The enzyme catalyses tRNA(Phe) + L-phenylalanine + ATP = L-phenylalanyl-tRNA(Phe) + AMP + diphosphate + H(+). The sequence is that of Phenylalanine--tRNA ligase beta subunit from Chlamydia trachomatis serovar A (strain ATCC VR-571B / DSM 19440 / HAR-13).